Reading from the N-terminus, the 450-residue chain is MAKKVFIKTFGCQMNEYDSDKMADVLHAAQGYEPTQNVEEADLILFNTCSVREKAQEKVFSDLGRVKHLKARGVRIGVGGCVASQEGAEIIRRAPYVDVVFGPQTLHRLPELLQQRERLDQPQIDISFPEIEKFDHLPAASVQGASAFVSIMEGCSKYCSYCVVPYTRGEEVSRPLDDVLVEVAGLADQGVKEVTLLGQNVNAYRGRMGSTAQRADLALLLDYVAGIPGVERIRYTTSHPNEFTPRLIEAYARLPKLANHLHLPVQHGSDRILMAMKRGYTAMEYKSTVRKLRAIRPDLALSSDFIVGFPGETQDDFDKLMRLIAEVHFDNSFSFVFSPRPGTPAAGLPDDTPHEVKLRRLQQLQGVIDTHIRSISASRVGTVQRILVEGASRRDAAELMGRTECNRVVNFAGPPHLVGQMVELTITEARAYTLRGQYCAQESPQATMAA.

Residues 3-118 (KKVFIKTFGC…LPELLQQRER (116 aa)) enclose the MTTase N-terminal domain. Residues C12, C49, C81, C155, C159, and C162 each coordinate [4Fe-4S] cluster. The Radical SAM core domain occupies 141-376 (SVQGASAFVS…VIDTHIRSIS (236 aa)). Residues 377 to 440 (ASRVGTVQRI…AYTLRGQYCA (64 aa)) form the TRAM domain.

It belongs to the methylthiotransferase family. MiaB subfamily. In terms of assembly, monomer. [4Fe-4S] cluster serves as cofactor.

It is found in the cytoplasm. The catalysed reaction is N(6)-dimethylallyladenosine(37) in tRNA + (sulfur carrier)-SH + AH2 + 2 S-adenosyl-L-methionine = 2-methylsulfanyl-N(6)-dimethylallyladenosine(37) in tRNA + (sulfur carrier)-H + 5'-deoxyadenosine + L-methionine + A + S-adenosyl-L-homocysteine + 2 H(+). Its function is as follows. Catalyzes the methylthiolation of N6-(dimethylallyl)adenosine (i(6)A), leading to the formation of 2-methylthio-N6-(dimethylallyl)adenosine (ms(2)i(6)A) at position 37 in tRNAs that read codons beginning with uridine. The protein is tRNA-2-methylthio-N(6)-dimethylallyladenosine synthase of Verminephrobacter eiseniae (strain EF01-2).